We begin with the raw amino-acid sequence, 510 residues long: MGACDNDFIELHSRVTADVWLARPWQCLHRTRALGTTATLAPKTLKPFEAIPQYSRNKWLKMIQILREQGQENLHLEMHQAFQELGPIFRHSAGGAQIVSVMLPEDAEKLHQVESILPRRMHLEPWVAHRELRGLRRGVFLLNGAEWRFNRLKLNPNVLSPKAVQNFVPMVDEVARDFLEALKKKVRQNARGSLTMDVQQSLFNYTIEASNFALFGERLGLLGHDLNPGSLKFIHALHSMFKSTTQLLFLPRSLTRWTSTQVWKEHFDAWDVISEYANRCIWKVHQELRLGSSQTYSGIVAALITQGALPLDAIKANSMELTAGSVDTTAIPLVMTLFELARNPDVQQALRQETLAAEASIAANPQKAMSDLPLLRAALKETLRLYPVGGFLERILNSDLVLQNYHVPAGTLVLLYLYSMGRNPAVFPRPERYMPQRWLERKRSFQHLAFGFGVRQCLGRRLAEVEMLLLLHHMLKTFQVETLRQEDVQMAYRFVLMPSSSPVLTFRPIS.

A mitochondrion-targeting transit peptide spans 1–34; that stretch reads MGACDNDFIELHSRVTADVWLARPWQCLHRTRAL. A 21-hydroxyprogesterone-binding site is contributed by phenylalanine 391. Cysteine 457 is a heme binding site.

This sequence belongs to the cytochrome P450 family. The cofactor is heme. Adrenal cortex.

The protein resides in the mitochondrion inner membrane. The enzyme catalyses a steroid + 2 reduced [adrenodoxin] + O2 + 2 H(+) = an 11beta-hydroxysteroid + 2 oxidized [adrenodoxin] + H2O. It carries out the reaction 21-hydroxyprogesterone + 2 reduced [adrenodoxin] + O2 + 2 H(+) = corticosterone + 2 oxidized [adrenodoxin] + H2O. It catalyses the reaction corticosterone + 2 reduced [adrenodoxin] + O2 + 2 H(+) = 18-hydroxycorticosterone + 2 oxidized [adrenodoxin] + H2O. The catalysed reaction is 18-hydroxycorticosterone + 2 reduced [adrenodoxin] + O2 + 2 H(+) = aldosterone + 2 oxidized [adrenodoxin] + 2 H2O. The enzyme catalyses 11-deoxycortisol + 2 reduced [adrenodoxin] + O2 + 2 H(+) = cortisol + 2 oxidized [adrenodoxin] + H2O. It carries out the reaction cortisol + 2 reduced [adrenodoxin] + O2 + 2 H(+) = 18-hydroxycortisol + 2 oxidized [adrenodoxin] + H2O. It catalyses the reaction 21-hydroxyprogesterone + 2 reduced [adrenodoxin] + O2 + 2 H(+) = 18-hydroxy-11-deoxycorticosterone + 2 oxidized [adrenodoxin] + H2O. The catalysed reaction is 18-hydroxycortisol + 2 reduced [adrenodoxin] + O2 + 2 H(+) = 18-oxocortisol + 2 oxidized [adrenodoxin] + 2 H2O. It participates in steroid biosynthesis. Functionally, a cytochrome P450 monooxygenase that catalyzes the biosynthesis of aldosterone, the main mineralocorticoid responsible for salt and water homeostasis. Catalyzes three sequential oxidative reactions of 11-deoxycorticosterone (21-hydroxyprogesterone), namely 11-beta hydroxylation, followed by two successive oxidations at C18 yielding 18-hydroxy and then 18-oxo intermediates (that do not leave the enzyme active site during the consecutive hydroxylation reactions), and end with the formation of aldosterone. Can also produce 18-hydroxycortisol and 18-oxocortisol, derived from successive oxidations of cortisol at C18, normally found at very low levels, but significantly increased in primary aldosteronism, the most common form of secondary hypertension. Mechanistically, uses molecular oxygen inserting one oxygen atom into a substrate and reducing the second into a water molecule. Two electrons are provided by NADPH via a two-protein mitochondrial transfer system comprising flavoprotein FDXR (adrenodoxin/ferredoxin reductase) and nonheme iron-sulfur protein FDX1 or FDX2 (adrenodoxin/ferredoxin). Could also be involved in the androgen metabolic pathway. This Rattus norvegicus (Rat) protein is Cytochrome P450 11B2, mitochondrial (Cyp11b2).